Reading from the N-terminus, the 393-residue chain is S-adenosylmethionine synthase 2 (393 aa).

Glu9 contributes to the Mg(2+) binding site. An ATP-binding site is contributed by His15. A K(+)-binding site is contributed by Glu43. Residues Glu56 and Gln99 each coordinate L-methionine. Residues 167-169, 235-238, Asp246, 252-253, Ala269, Lys273, and Lys277 each bind ATP; these read DGK, SGRF, and RK. Residue Asp246 coordinates L-methionine. Lys277 is a binding site for L-methionine.

It belongs to the AdoMet synthase family. Homotetramer. The cofactor is Mn(2+). Requires Mg(2+) as cofactor. Co(2+) is required as a cofactor. K(+) serves as cofactor.

The protein resides in the cytoplasm. The enzyme catalyses L-methionine + ATP + H2O = S-adenosyl-L-methionine + phosphate + diphosphate. The protein operates within amino-acid biosynthesis; S-adenosyl-L-methionine biosynthesis; S-adenosyl-L-methionine from L-methionine: step 1/1. Its function is as follows. Catalyzes the formation of S-adenosylmethionine from methionine and ATP. The reaction comprises two steps that are both catalyzed by the same enzyme: formation of S-adenosylmethionine (AdoMet) and triphosphate, and subsequent hydrolysis of the triphosphate. The chain is S-adenosylmethionine synthase 2 (METK2) from Populus trichocarpa (Western balsam poplar).